A 271-amino-acid chain; its full sequence is 3-methyl-2-oxobutanoate hydroxymethyltransferase (271 aa).

Mg(2+) contacts are provided by D51 and D90. Residues 51–52 (DS), D90, and K119 contribute to the 3-methyl-2-oxobutanoate site. Position 121 (E121) interacts with Mg(2+). Residue E188 is the Proton acceptor of the active site.

It belongs to the PanB family. In terms of assembly, homodecamer; pentamer of dimers. Mg(2+) is required as a cofactor.

Its subcellular location is the cytoplasm. It catalyses the reaction 3-methyl-2-oxobutanoate + (6R)-5,10-methylene-5,6,7,8-tetrahydrofolate + H2O = 2-dehydropantoate + (6S)-5,6,7,8-tetrahydrofolate. The protein operates within cofactor biosynthesis; (R)-pantothenate biosynthesis; (R)-pantoate from 3-methyl-2-oxobutanoate: step 1/2. Its function is as follows. Catalyzes the reversible reaction in which hydroxymethyl group from 5,10-methylenetetrahydrofolate is transferred onto alpha-ketoisovalerate to form ketopantoate. The protein is 3-methyl-2-oxobutanoate hydroxymethyltransferase of Aromatoleum aromaticum (strain DSM 19018 / LMG 30748 / EbN1) (Azoarcus sp. (strain EbN1)).